A 211-amino-acid chain; its full sequence is Peroxiredoxin (211 aa).

Residues 2–156 (PLIGDKFPEM…IVRMIRAFRV (155 aa)) enclose the Thioredoxin domain. Catalysis depends on Cys-44, which acts as the Cysteine sulfenic acid (-SOH) intermediate. Arg-119 lines the substrate pocket. Cys-198 and Cys-204 are oxidised to a cystine.

This sequence belongs to the peroxiredoxin family. Prx6 subfamily. Homodecamer. Pentamer of dimers that assemble into a ring structure.

It is found in the cytoplasm. It catalyses the reaction a hydroperoxide + [thioredoxin]-dithiol = an alcohol + [thioredoxin]-disulfide + H2O. Thiol-specific peroxidase that catalyzes the reduction of hydrogen peroxide and organic hydroperoxides to water and alcohols, respectively. Plays a role in cell protection against oxidative stress by detoxifying peroxides. This chain is Peroxiredoxin, found in Methanothermobacter marburgensis (strain ATCC BAA-927 / DSM 2133 / JCM 14651 / NBRC 100331 / OCM 82 / Marburg) (Methanobacterium thermoautotrophicum).